The primary structure comprises 160 residues: Cytochrome b6-f complex subunit 4 (160 aa).

Transmembrane regions (helical) follow at residues 36 to 56, 95 to 115, and 131 to 151; these read LLYI…GLAV, LLGV…PFLE, and TVFL…ALPI.

It belongs to the cytochrome b family. PetD subfamily. The 4 large subunits of the cytochrome b6-f complex are cytochrome b6, subunit IV (17 kDa polypeptide, petD), cytochrome f and the Rieske protein, while the 4 small subunits are petG, petL, petM and petN. The complex functions as a dimer.

Its subcellular location is the plastid. The protein resides in the chloroplast thylakoid membrane. In terms of biological role, component of the cytochrome b6-f complex, which mediates electron transfer between photosystem II (PSII) and photosystem I (PSI), cyclic electron flow around PSI, and state transitions. The polypeptide is Cytochrome b6-f complex subunit 4 (Spirogyra maxima (Green alga)).